Consider the following 380-residue polypeptide: Pregnancy-associated glycoprotein 6 (380 aa).

Residues 1–15 form the signal peptide; the sequence is MKWLVLLGLVSISEC. Residues 16 to 53 constitute a propeptide, activation peptide; the sequence is IVKIPLRRVKTMRKTLSEKNMLNNFLKEHAYRLSQISF. Residues asparagine 57 and asparagine 74 are each glycosylated (N-linked (GlcNAc...) asparagine). The region spanning 71–377 is the Peptidase A1 domain; sequence YLGNITIGTP…DRGHDRIGLA (307 aa). Residue aspartate 89 is part of the active site. Cysteine 102 and cysteine 107 are joined by a disulfide. A glycan (N-linked (GlcNAc...) asparagine) is linked at asparagine 125. Cysteine 261 and cysteine 265 are joined by a disulfide. Aspartate 270 is an active-site residue. Cysteine 303 and cysteine 337 are joined by a disulfide.

This sequence belongs to the peptidase A1 family. As to expression, trophoblast and placental tissue. Produced specifically in the invasive binucleate cells of the placenta.

The protein resides in the secreted. It is found in the extracellular space. The polypeptide is Pregnancy-associated glycoprotein 6 (Ovis aries (Sheep)).